A 448-amino-acid polypeptide reads, in one-letter code: Phosphoglucosamine mutase (448 aa).

The Phosphoserine intermediate role is filled by S100. The Mg(2+) site is built by S100, D240, D242, and D244. A Phosphoserine modification is found at S100.

It belongs to the phosphohexose mutase family. Requires Mg(2+) as cofactor. Activated by phosphorylation.

The enzyme catalyses alpha-D-glucosamine 1-phosphate = D-glucosamine 6-phosphate. Functionally, catalyzes the conversion of glucosamine-6-phosphate to glucosamine-1-phosphate. The chain is Phosphoglucosamine mutase from Bacillus cytotoxicus (strain DSM 22905 / CIP 110041 / 391-98 / NVH 391-98).